The following is a 102-amino-acid chain: Urease subunit beta (102 aa).

It belongs to the urease beta subunit family. Heterotrimer of UreA (gamma), UreB (beta) and UreC (alpha) subunits. Three heterotrimers associate to form the active enzyme.

Its subcellular location is the cytoplasm. The enzyme catalyses urea + 2 H2O + H(+) = hydrogencarbonate + 2 NH4(+). Its pathway is nitrogen metabolism; urea degradation; CO(2) and NH(3) from urea (urease route): step 1/1. The sequence is that of Urease subunit beta from Trichodesmium erythraeum (strain IMS101).